A 2410-amino-acid chain; its full sequence is Genome polyprotein 1 (2410 aa).

A disordered region spans residues 1 to 21 (MEQTLAQAVSRRNKTDTPMAE). The Helicase ATP-binding domain occupies 474-632 (AMADANNCWS…AARKYPLHVE (159 aa)). 487–494 (GHTGSGKS) is an ATP binding site. Residues 583-586 (DEAH) carry the DEAH box motif. Residues 647 to 813 (GGGDLLDISK…NVPFYMNETF (167 aa)) form the Helicase C-terminal domain. Y1234 carries the post-translational modification O-(5'-phospho-RNA)-tyrosine. The region spanning 1359 to 1573 (ITLEASTGIL…CGYASHTALF (215 aa)) is the Peptidase C4 domain. Active-site for nuclear inclusion protein A activity residues include H1404, D1440, and C1507. One can recognise a RdRp catalytic domain in the interval 1857 to 1980 (WLHGSGDGSR…AISPQFDEEF (124 aa)). Positions 2175 to 2200 (MPTEDDGKLKTPSGARIPSSAADGNW) are disordered.

This sequence belongs to the bymoviruses polyprotein 1 family. Post-translationally, VPg is uridylylated by the polymerase and is covalently attached to the 5'-end of the genomic RNA. This uridylylated form acts as a nucleotide-peptide primer for the polymerase. The viral RNA1 of bymoviruses is expressed as a single polyprotein which undergoes post-translational proteolytic processing by the main proteinase NIa-pro resulting in the production of at least eight individual proteins.

It is found in the host cytoplasmic vesicle. It localises to the virion. It carries out the reaction RNA(n) + a ribonucleoside 5'-triphosphate = RNA(n+1) + diphosphate. It catalyses the reaction Hydrolyzes glutaminyl bonds, and activity is further restricted by preferences for the amino acids in P6 - P1' that vary with the species of potyvirus, e.g. Glu-Xaa-Xaa-Tyr-Xaa-Gln-|-(Ser or Gly) for the enzyme from tobacco etch virus. The natural substrate is the viral polyprotein, but other proteins and oligopeptides containing the appropriate consensus sequence are also cleaved.. Indispensable for virus replication. Functionally, mediates the cap-independent, EIF4E-dependent translation of viral genomic RNAs. Binds to the cap-binding site of host EIF4E and thus interferes with the host EIF4E-dependent mRNA export and translation. VPg-RNA directly binds EIF4E and is a template for transcription. Also forms trimeric complexes with EIF4E-EIF4G, which are templates for translation. Its function is as follows. Has RNA-binding and proteolytic activities. In terms of biological role, an RNA-dependent RNA polymerase that plays an essential role in the virus replication. This chain is Genome polyprotein 1, found in Hordeum vulgare (Barley).